The sequence spans 294 residues: Porphobilinogen deaminase (294 aa).

Position 232 is an S-(dipyrrolylmethanemethyl)cysteine (cysteine 232).

This sequence belongs to the HMBS family. Monomer. Requires dipyrromethane as cofactor.

It catalyses the reaction 4 porphobilinogen + H2O = hydroxymethylbilane + 4 NH4(+). Its pathway is porphyrin-containing compound metabolism; protoporphyrin-IX biosynthesis; coproporphyrinogen-III from 5-aminolevulinate: step 2/4. Its function is as follows. Tetrapolymerization of the monopyrrole PBG into the hydroxymethylbilane pre-uroporphyrinogen in several discrete steps. The sequence is that of Porphobilinogen deaminase from Corynebacterium diphtheriae (strain ATCC 700971 / NCTC 13129 / Biotype gravis).